A 383-amino-acid polypeptide reads, in one-letter code: 3-ketosteroid-9-alpha-monooxygenase, oxygenase component (383 aa).

The Rieske domain maps to 24-126 (WHCLGPVKNF…TDVRGGLLFV (103 aa)). The [2Fe-2S] cluster site is built by cysteine 65, histidine 67, cysteine 84, and histidine 87. Fe cation-binding residues include asparagine 173, histidine 179, histidine 184, and aspartate 302.

In terms of assembly, homotrimer. The two-component system 3-ketosteroid-9-alpha-monooxygenase is composed of an oxygenase component KshA and a reductase component KshB. [2Fe-2S] cluster serves as cofactor. Requires Fe cation as cofactor.

It carries out the reaction androsta-1,4-diene-3,17-dione + 2 reduced [2Fe-2S]-[ferredoxin] + O2 + 2 H(+) = 9alpha-hydroxyandrosta-1,4-diene-3,17-dione + 2 oxidized [2Fe-2S]-[ferredoxin] + H2O. Its pathway is lipid metabolism; steroid biosynthesis. Involved in the degradation of cholesterol. Catalyzes the introduction of a 9a-hydroxyl moiety into 1,4-androstadiene-3,17-dione (ADD) to yield the 9alpha-hydroxy-1,4-androstadiene-3,17-dione (9OHADD) intermediate which spontaneously form 3-hydroxy-9,10-seconandrost-1,3,5(10)-triene-9,17-dione (HSA) via the meta-cleavage of ring B with concomitant aromatization of ring A. The sequence is that of 3-ketosteroid-9-alpha-monooxygenase, oxygenase component (kshA) from Mycolicibacterium smegmatis (strain ATCC 700084 / mc(2)155) (Mycobacterium smegmatis).